A 493-amino-acid chain; its full sequence is Alpha-amylase-related protein (493 aa).

The signal sequence occupies residues 1–19 (MFKFALTLTLCLAGSLSLA). A Pyrrolidone carboxylic acid modification is found at Gln-20. A disulfide bridge connects residues Cys-47 and Cys-103. 3 residues coordinate Ca(2+): Asn-117, Gln-168, and Asp-177. Cysteines 156 and 170 form a disulfide. Arg-205 contacts chloride. Asp-207 (nucleophile) is an active-site residue. His-211 contributes to the Ca(2+) binding site. The Proton donor role is filled by Glu-244. Asn-307 and Arg-342 together coordinate chloride. 3 cysteine pairs are disulfide-bonded: Cys-375–Cys-381, Cys-417–Cys-440, and Cys-447–Cys-459.

It belongs to the glycosyl hydrolase 13 family. Monomer. Ca(2+) is required as a cofactor. Requires chloride as cofactor. In terms of tissue distribution, midgut and fat body.

The protein localises to the secreted. It carries out the reaction Endohydrolysis of (1-&gt;4)-alpha-D-glucosidic linkages in polysaccharides containing three or more (1-&gt;4)-alpha-linked D-glucose units.. This is Alpha-amylase-related protein (Amyrel) from Drosophila melanogaster (Fruit fly).